The sequence spans 542 residues: Adenine deaminase (542 aa).

The protein belongs to the metallo-dependent hydrolases superfamily. Adenine deaminase family. Mn(2+) is required as a cofactor.

The catalysed reaction is adenine + H2O + H(+) = hypoxanthine + NH4(+). The polypeptide is Adenine deaminase (Methanosphaera stadtmanae (strain ATCC 43021 / DSM 3091 / JCM 11832 / MCB-3)).